The sequence spans 199 residues: Ras-related protein Rab-7b (199 aa).

Residues 15 to 22 (GALGVGKT), 34 to 40 (FEEYQTT), 63 to 67 (DTGGQ), 124 to 127 (NKID), and 154 to 155 (AK) contribute to the GTP site. 2 short sequence motifs (switch) span residues 28–41 (YVHK…QTTL) and 67–82 (QERF…KGSD). Residue S186 is modified to Phosphoserine. 2 S-geranylgeranyl cysteine lipidation sites follow: C198 and C199.

Belongs to the small GTPase superfamily. Rab family.

The protein localises to the late endosome. It is found in the lysosome. Its subcellular location is the golgi apparatus. It localises to the trans-Golgi network. The protein resides in the cytoplasmic vesicle. The protein localises to the phagosome. It is found in the phagosome membrane. Controls vesicular trafficking from endosomes to the trans-Golgi network (TGN). Acts as a negative regulator of TLR9 signaling and can suppress TLR9-triggered TNFA, IL6, and IFNB production in macrophages by promoting TLR9 lysosomal degradation. Also negatively regulates TLR4 signaling in macrophages by promoting lysosomal degradation of TLR4. Promotes megakaryocytic differentiation by increasing NF-kappa-B-dependent IL6 production and subsequently enhancing the association of STAT3 with GATA1. Not involved in the regulation of the EGF- and EGFR degradation pathway. The chain is Ras-related protein Rab-7b (Rab7b) from Mus musculus (Mouse).